The sequence spans 197 residues: Phosphoheptose isomerase (197 aa).

Residues 34-196 (MVQCLLGGNK…DRTLFPQDEQ (163 aa)) enclose the SIS domain. 49–51 (NGG) is a substrate binding site. Zn(2+)-binding residues include histidine 58 and glutamate 62. Residues glutamate 62, 91–92 (ND), 117–119 (STS), serine 122, and glutamine 172 contribute to the substrate site. Zn(2+) is bound by residues glutamine 172 and histidine 180.

The protein belongs to the SIS family. GmhA subfamily. In terms of assembly, homotetramer. Requires Zn(2+) as cofactor.

Its subcellular location is the cytoplasm. The catalysed reaction is 2 D-sedoheptulose 7-phosphate = D-glycero-alpha-D-manno-heptose 7-phosphate + D-glycero-beta-D-manno-heptose 7-phosphate. It participates in carbohydrate biosynthesis; D-glycero-D-manno-heptose 7-phosphate biosynthesis; D-glycero-alpha-D-manno-heptose 7-phosphate and D-glycero-beta-D-manno-heptose 7-phosphate from sedoheptulose 7-phosphate: step 1/1. Catalyzes the isomerization of sedoheptulose 7-phosphate in D-glycero-D-manno-heptose 7-phosphate. The polypeptide is Phosphoheptose isomerase (Shewanella oneidensis (strain ATCC 700550 / JCM 31522 / CIP 106686 / LMG 19005 / NCIMB 14063 / MR-1)).